A 376-amino-acid polypeptide reads, in one-letter code: Glucose-1-phosphate adenylyltransferase (376 aa).

Residues Tyr-101, Gly-166, 181–182 (EK), and Ser-192 contribute to the alpha-D-glucose 1-phosphate site.

Belongs to the bacterial/plant glucose-1-phosphate adenylyltransferase family. As to quaternary structure, homotetramer.

It catalyses the reaction alpha-D-glucose 1-phosphate + ATP + H(+) = ADP-alpha-D-glucose + diphosphate. It functions in the pathway glycan biosynthesis; glycogen biosynthesis. Functionally, involved in the biosynthesis of ADP-glucose, a building block required for the elongation reactions to produce glycogen. Catalyzes the reaction between ATP and alpha-D-glucose 1-phosphate (G1P) to produce pyrophosphate and ADP-Glc. The protein is Glucose-1-phosphate adenylyltransferase of Bacillus thuringiensis (strain Al Hakam).